The chain runs to 410 residues: Riboflavin biosynthesis protein RibBA (410 aa).

The tract at residues 1–205 (MENKRIDTIE…IKDLVAFQMR (205 aa)) is DHBP synthase. D-ribulose 5-phosphate contacts are provided by residues 30–31 (RE), Asp-35, 144–148 (RVGHT), and Glu-168. Glu-31 contributes to the Mg(2+) binding site. Residue His-147 participates in Mg(2+) binding. A GTP cyclohydrolase II region spans residues 206 to 410 (RSKLVQRAVE…ISCSCGSGNH (205 aa)). 256–260 (RVHSQ) is a binding site for GTP. Cys-261, Cys-272, and Cys-274 together coordinate Zn(2+). GTP is bound by residues Gln-277, 299 to 301 (EGR), and Thr-321. The Proton acceptor; for GTP cyclohydrolase activity role is filled by Asp-333. Arg-335 (nucleophile; for GTP cyclohydrolase activity) is an active-site residue. Positions 356 and 361 each coordinate GTP.

It in the N-terminal section; belongs to the DHBP synthase family. In the C-terminal section; belongs to the GTP cyclohydrolase II family. It depends on Mg(2+) as a cofactor. Mn(2+) serves as cofactor. The cofactor is Zn(2+).

The enzyme catalyses D-ribulose 5-phosphate = (2S)-2-hydroxy-3-oxobutyl phosphate + formate + H(+). The catalysed reaction is GTP + 4 H2O = 2,5-diamino-6-hydroxy-4-(5-phosphoribosylamino)-pyrimidine + formate + 2 phosphate + 3 H(+). The protein operates within cofactor biosynthesis; riboflavin biosynthesis; 2-hydroxy-3-oxobutyl phosphate from D-ribulose 5-phosphate: step 1/1. It functions in the pathway cofactor biosynthesis; riboflavin biosynthesis; 5-amino-6-(D-ribitylamino)uracil from GTP: step 1/4. Its function is as follows. Catalyzes the conversion of D-ribulose 5-phosphate to formate and 3,4-dihydroxy-2-butanone 4-phosphate. In terms of biological role, catalyzes the conversion of GTP to 2,5-diamino-6-ribosylamino-4(3H)-pyrimidinone 5'-phosphate (DARP), formate and pyrophosphate. The sequence is that of Riboflavin biosynthesis protein RibBA from Chlorobium phaeovibrioides (strain DSM 265 / 1930) (Prosthecochloris vibrioformis (strain DSM 265)).